A 190-amino-acid polypeptide reads, in one-letter code: Threonylcarbamoyl-AMP synthase (190 aa).

Residues 7 to 190 (GDAIAAAIDV…ALTGELFRQG (184 aa)) form the YrdC-like domain.

Belongs to the SUA5 family. TsaC subfamily.

The protein localises to the cytoplasm. The catalysed reaction is L-threonine + hydrogencarbonate + ATP = L-threonylcarbamoyladenylate + diphosphate + H2O. Functionally, required for the formation of a threonylcarbamoyl group on adenosine at position 37 (t(6)A37) in tRNAs that read codons beginning with adenine. Catalyzes the conversion of L-threonine, HCO(3)(-)/CO(2) and ATP to give threonylcarbamoyl-AMP (TC-AMP) as the acyladenylate intermediate, with the release of diphosphate. The polypeptide is Threonylcarbamoyl-AMP synthase (Escherichia coli O6:H1 (strain CFT073 / ATCC 700928 / UPEC)).